The following is a 469-amino-acid chain: 3-isopropylmalate dehydratase large subunit (469 aa).

Residues Cys346, Cys406, and Cys409 each coordinate [4Fe-4S] cluster.

It belongs to the aconitase/IPM isomerase family. LeuC type 1 subfamily. Heterodimer of LeuC and LeuD. The cofactor is [4Fe-4S] cluster.

It catalyses the reaction (2R,3S)-3-isopropylmalate = (2S)-2-isopropylmalate. The protein operates within amino-acid biosynthesis; L-leucine biosynthesis; L-leucine from 3-methyl-2-oxobutanoate: step 2/4. Catalyzes the isomerization between 2-isopropylmalate and 3-isopropylmalate, via the formation of 2-isopropylmaleate. This is 3-isopropylmalate dehydratase large subunit from Lysinibacillus sphaericus (strain C3-41).